The chain runs to 552 residues: Protein FAM234A (552 aa).

A disordered region spans residues 1 to 40 (MMDDKDLEAEIHPLKNEDKKSQENLGNLPKTEDNLKNKPV). Residues 1–49 (MMDDKDLEAEIHPLKNEDKKSQENLGNLPKTEDNLKNKPVPSRLSRCRT) lie on the Cytoplasmic side of the membrane. The span at 8–22 (EAEIHPLKNEDKKSQ) shows a compositional bias: basic and acidic residues. Phosphoserine is present on Ser-21. The helical; Signal-anchor for type II membrane protein transmembrane segment at 50 to 70 (VAFFLSLFICLFVVFVLSFII) threads the bilayer. Topologically, residues 71 to 552 (PCPDRPSSED…FSRLRYRSEV (482 aa)) are extracellular. Asn-116, Asn-119, Asn-314, and Asn-473 each carry an N-linked (GlcNAc...) asparagine glycan.

The protein belongs to the FAM234 family.

The protein resides in the membrane. This Rattus norvegicus (Rat) protein is Protein FAM234A (Fam234a).